Reading from the N-terminus, the 144-residue chain is Large ribosomal subunit protein uL15 (144 aa).

The tract at residues 1-57 (MELNNLKPAEGAKHAKRRVGRGIGSGLGKTAGRGHKGQKSRSGGFHKVGFEGGQMPL) is disordered. Residues 21–31 (RGIGSGLGKTA) are compositionally biased toward gly residues.

The protein belongs to the universal ribosomal protein uL15 family. In terms of assembly, part of the 50S ribosomal subunit.

Its function is as follows. Binds to the 23S rRNA. The sequence is that of Large ribosomal subunit protein uL15 from Paraburkholderia xenovorans (strain LB400).